Consider the following 767-residue polypeptide: AMP deaminase 3 (767 aa).

2 positions are modified to phosphoserine: serine 85 and serine 107. Disordered stretches follow at residues 89–111 (QMPPQQDWKGPPAASPAMSPTTP) and 181–205 (LGHPRADTAPPEEGLPDFHPPPLPQ). 2 residues coordinate Zn(2+): histidine 317 and histidine 319. Substrate is bound by residues histidine 319 and 388–393 (KFNSKY). Residue histidine 586 coordinates Zn(2+). Glutamate 589 is a substrate binding site. Catalysis depends on histidine 608, which acts as the Proton acceptor. Residue aspartate 663 coordinates Zn(2+). 664–667 (DPMQ) lines the substrate pocket.

The protein belongs to the metallo-dependent hydrolases superfamily. Adenosine and AMP deaminases family. Homotetramer. It depends on Zn(2+) as a cofactor.

The catalysed reaction is AMP + H2O + H(+) = IMP + NH4(+). The protein operates within purine metabolism; IMP biosynthesis via salvage pathway; IMP from AMP: step 1/1. In terms of biological role, AMP deaminase plays a critical role in energy metabolism. The protein is AMP deaminase 3 of Homo sapiens (Human).